The sequence spans 296 residues: Carboxylesterase YbfK (296 aa).

Active-site charge relay system residues include Ser129, Glu244, and His273.

Belongs to the AB hydrolase superfamily.

It is found in the cytoplasm. The catalysed reaction is a carboxylic ester + H2O = an alcohol + a carboxylate + H(+). In terms of biological role, shows carboxylesterase activity in vitro. This is Carboxylesterase YbfK (ybfK) from Bacillus subtilis (strain 168).